The chain runs to 177 residues: UPF0114 protein jhp_0175 (177 aa).

A run of 3 helical transmembrane segments spans residues Trp-15–Phe-35, Leu-54–Val-74, and Pro-145–Val-165.

It belongs to the UPF0114 family.

The protein localises to the cell membrane. The polypeptide is UPF0114 protein jhp_0175 (Helicobacter pylori (strain J99 / ATCC 700824) (Campylobacter pylori J99)).